The sequence spans 398 residues: Probable L-tyrosine/L-aspartate decarboxylase (398 aa).

Lys242 bears the N6-(pyridoxal phosphate)lysine mark.

This sequence belongs to the group II decarboxylase family. MfnA subfamily. Pyridoxal 5'-phosphate is required as a cofactor.

It carries out the reaction L-tyrosine + H(+) = tyramine + CO2. It catalyses the reaction L-aspartate + H(+) = beta-alanine + CO2. It participates in cofactor biosynthesis; methanofuran biosynthesis. Its pathway is cofactor biosynthesis; coenzyme A biosynthesis. In terms of biological role, catalyzes the decarboxylation of L-tyrosine to produce tyramine for methanofuran biosynthesis. Can also catalyze the decarboxylation of L-aspartate to produce beta-alanine for coenzyme A (CoA) biosynthesis. In Methanosarcina mazei (strain ATCC BAA-159 / DSM 3647 / Goe1 / Go1 / JCM 11833 / OCM 88) (Methanosarcina frisia), this protein is Probable L-tyrosine/L-aspartate decarboxylase.